The primary structure comprises 453 residues: Phosphoglucosamine mutase (453 aa).

Catalysis depends on S102, which acts as the Phosphoserine intermediate. Residues S102, D243, D245, and D247 each contribute to the Mg(2+) site. S102 carries the phosphoserine modification.

This sequence belongs to the phosphohexose mutase family. The cofactor is Mg(2+). In terms of processing, activated by phosphorylation.

The enzyme catalyses alpha-D-glucosamine 1-phosphate = D-glucosamine 6-phosphate. In terms of biological role, catalyzes the conversion of glucosamine-6-phosphate to glucosamine-1-phosphate. The chain is Phosphoglucosamine mutase from Bartonella tribocorum (strain CIP 105476 / IBS 506).